The primary structure comprises 88 residues: Phosphocarrier protein HPr (88 aa).

The HPr domain occupies 1 to 88 (MEKREFNIIA…DTMKKEGLAE (88 aa)). The active-site Pros-phosphohistidine intermediate is the His-15. Ser-46 carries the post-translational modification Phosphoserine; by HPrK/P.

Belongs to the HPr family.

It is found in the cytoplasm. Phosphorylation on Ser-46 inhibits the phosphoryl transfer from enzyme I to HPr. Its function is as follows. General (non sugar-specific) component of the phosphoenolpyruvate-dependent sugar phosphotransferase system (sugar PTS). This major carbohydrate active-transport system catalyzes the phosphorylation of incoming sugar substrates concomitantly with their translocation across the cell membrane. The phosphoryl group from phosphoenolpyruvate (PEP) is transferred to the phosphoryl carrier protein HPr by enzyme I. Phospho-HPr then transfers it to the PTS EIIA domain. In terms of biological role, P-Ser-HPr interacts with the catabolite control protein A (CcpA), forming a complex that binds to DNA at the catabolite response elements cre, operator sites preceding a large number of catabolite-regulated genes. Thus, P-Ser-HPr is a corepressor in carbon catabolite repression (CCR), a mechanism that allows bacteria to coordinate and optimize the utilization of available carbon sources. P-Ser-HPr also plays a role in inducer exclusion, in which it probably interacts with several non-PTS permeases and inhibits their transport activity. This Lacticaseibacillus casei (Lactobacillus casei) protein is Phosphocarrier protein HPr (ptsH).